A 909-amino-acid chain; its full sequence is Aconitate hydratase A (909 aa).

[4Fe-4S] cluster is bound by residues cysteine 450, cysteine 516, and cysteine 519.

The protein belongs to the aconitase/IPM isomerase family. As to quaternary structure, monomer. [4Fe-4S] cluster serves as cofactor.

The enzyme catalyses citrate = D-threo-isocitrate. It carries out the reaction 3-hydroxybutane-1,2,3-tricarboxylate = 2-methyl-cis-aconitate + H2O. It participates in carbohydrate metabolism; tricarboxylic acid cycle; isocitrate from oxaloacetate: step 2/2. In terms of biological role, involved in both the tricarboxylic acid (TCA) and methylcitric acid cycles. Catalyzes the reversible isomerization of citrate to isocitrate via cis-aconitate. Also catalyzes the rehydration of 2-methyl-cis-aconitate to produce 2-methylisocitrate. The apo form of AcnA functions as a RNA-binding regulatory protein which plays a role in the regulation of citrate concentration and in the sporulation. To prevent the accumulation of excessive levels of citrate, it binds near the 5' end of the citZ mRNA, decreasing its stability and thereby limiting the concentration of citrate synthase in the cell. Aconitase also binds to the gerE transcript late in sporulation and stabilizes it for translation, thereby increasing the rate and level of GerE protein accumulation. This chain is Aconitate hydratase A (citB), found in Bacillus subtilis (strain 168).